A 589-amino-acid chain; its full sequence is Vomeromodulin (589 aa).

The first 29 residues, 1 to 29, serve as a signal peptide directing secretion; the sequence is MWVLQALAIMLSIQAGVLDLVEVPPVVRS. Disordered regions lie at residues 49 to 71 and 146 to 170; these read GLND…SRGG and LLGK…GLGQ. Residues Asn-419 and Asn-437 are each glycosylated (N-linked (GlcNAc...) asparagine).

In terms of processing, N-glycosylated. The N-glycans consist mainly of complex sialylated and fucosylated biantennary structures. Abundant in the lateral nasal glands. Also present in the posterior septal and vomeronasal glands.

It localises to the secreted. The chain is Vomeromodulin from Rattus norvegicus (Rat).